The primary structure comprises 407 residues: MIRYPYFCRMYKECLSCWLESGIPNLGVWPKTIHTTAEKYREYEAREQTDQTQAQELHRSQDRDFETMAKLHIPVMVDEVLHCLSPQKGQIFLDMTFGSGGHTKAILQKESDIVLYALDRDPTAYALAEHLSELYPKQIRAMLGQFSQAETLLMKAGVQPGTFDGVLMDLGCSSMQLDTPERGFSLRKDGPLDMRMDGGRYPDMPTAADVVNAFDQQALASILRTYGEEKHAKKIASAIVQARSIYPITRTQQLASIVAGAFPPSAIYARKDLLQRSTHIATKTFQAVRIFVNNELNELYMGLKTAQKFLRPGGRLVALSFHSLEDRIIKRFLLGISMTERFNLSVRQQVMKTSQLGSDHENTEEVSKRRAPLMWELIHKKVLSPQDQDVQDNPRARSAKLRAAIKL.

Residues 100-102, D119, F146, D169, and Q176 contribute to the S-adenosyl-L-methionine site; that span reads GGH. S358 carries the phosphoserine modification.

This sequence belongs to the methyltransferase superfamily. RsmH family.

It localises to the mitochondrion matrix. It carries out the reaction cytidine(839) in 12S rRNA + S-adenosyl-L-methionine = N(4)-methylcytidine(839) in 12S rRNA + S-adenosyl-L-homocysteine + H(+). N4-methylcytidine (m4C) methyltransferase responsible for the methylation of position C839 in mitochondrial 12S rRNA. Involved in the stabilization of 12S rRNA folding, therefore facilitating the assembly of the mitochondrial small ribosomal subunits. The sequence is that of 12S rRNA N(4)-cytidine methyltransferase METTL15 (METTL15) from Pongo abelii (Sumatran orangutan).